The sequence spans 736 residues: 1,4-alpha-glucan branching enzyme GlgB (736 aa).

Aspartate 419 functions as the Nucleophile in the catalytic mechanism. The active-site Proton donor is glutamate 472.

This sequence belongs to the glycosyl hydrolase 13 family. GlgB subfamily. In terms of assembly, monomer.

It carries out the reaction Transfers a segment of a (1-&gt;4)-alpha-D-glucan chain to a primary hydroxy group in a similar glucan chain.. The protein operates within glycan biosynthesis; glycogen biosynthesis. Its function is as follows. Catalyzes the formation of the alpha-1,6-glucosidic linkages in glycogen by scission of a 1,4-alpha-linked oligosaccharide from growing alpha-1,4-glucan chains and the subsequent attachment of the oligosaccharide to the alpha-1,6 position. The protein is 1,4-alpha-glucan branching enzyme GlgB of Rhizobium meliloti (strain 1021) (Ensifer meliloti).